A 259-amino-acid polypeptide reads, in one-letter code: Flagellar L-ring protein (259 aa).

The first 15 residues, 1-15 (MKRISLIALVTLMSG), serve as a signal peptide directing secretion. Residue Cys-16 is the site of N-palmitoyl cysteine attachment. Cys-16 is lipidated: S-diacylglycerol cysteine.

This sequence belongs to the FlgH family. The basal body constitutes a major portion of the flagellar organelle and consists of four rings (L,P,S, and M) mounted on a central rod.

It is found in the cell outer membrane. Its subcellular location is the bacterial flagellum basal body. In terms of biological role, assembles around the rod to form the L-ring and probably protects the motor/basal body from shearing forces during rotation. In Vibrio vulnificus (strain YJ016), this protein is Flagellar L-ring protein.